Consider the following 239-residue polypeptide: 2-C-methyl-D-erythritol 4-phosphate cytidylyltransferase (239 aa).

The protein belongs to the IspD/TarI cytidylyltransferase family. IspD subfamily.

The catalysed reaction is 2-C-methyl-D-erythritol 4-phosphate + CTP + H(+) = 4-CDP-2-C-methyl-D-erythritol + diphosphate. It participates in isoprenoid biosynthesis; isopentenyl diphosphate biosynthesis via DXP pathway; isopentenyl diphosphate from 1-deoxy-D-xylulose 5-phosphate: step 2/6. In terms of biological role, catalyzes the formation of 4-diphosphocytidyl-2-C-methyl-D-erythritol from CTP and 2-C-methyl-D-erythritol 4-phosphate (MEP). The protein is 2-C-methyl-D-erythritol 4-phosphate cytidylyltransferase of Acinetobacter baylyi (strain ATCC 33305 / BD413 / ADP1).